The sequence spans 69 residues: Small ribosomal subunit protein uS14 (69 aa).

Cysteine 33, cysteine 36, cysteine 51, and cysteine 54 together coordinate Zn(2+).

This sequence belongs to the universal ribosomal protein uS14 family. Zinc-binding uS14 subfamily. In terms of assembly, part of the 30S ribosomal subunit. The cofactor is Zn(2+).

Binds 16S rRNA, required for the assembly of 30S particles. The protein is Small ribosomal subunit protein uS14 of Nanoarchaeum equitans (strain Kin4-M).